Consider the following 245-residue polypeptide: Bis(5'-nucleosyl)-tetraphosphatase PrpE [asymmetrical] (245 aa).

The protein belongs to the PrpE family. The cofactor is Ni(2+).

It carries out the reaction P(1),P(4)-bis(5'-guanosyl) tetraphosphate + H2O = GMP + GTP + 2 H(+). Functionally, asymmetrically hydrolyzes Ap4p to yield AMP and ATP. This chain is Bis(5'-nucleosyl)-tetraphosphatase PrpE [asymmetrical], found in Geobacillus thermodenitrificans (strain NG80-2).